The chain runs to 404 residues: Argininosuccinate synthase (404 aa).

ATP contacts are provided by residues 10–18 (AYSGGVDTS) and A38. Y89 is an L-citrulline binding site. G119 lines the ATP pocket. 3 residues coordinate L-aspartate: T121, N125, and D126. N125 serves as a coordination point for L-citrulline. L-citrulline-binding residues include R129, S177, S186, E262, and Y274.

The protein belongs to the argininosuccinate synthase family. Type 1 subfamily. As to quaternary structure, homotetramer.

The protein localises to the cytoplasm. It catalyses the reaction L-citrulline + L-aspartate + ATP = 2-(N(omega)-L-arginino)succinate + AMP + diphosphate + H(+). It functions in the pathway amino-acid biosynthesis; L-arginine biosynthesis; L-arginine from L-ornithine and carbamoyl phosphate: step 2/3. The polypeptide is Argininosuccinate synthase (Prochlorococcus marinus (strain MIT 9312)).